The chain runs to 231 residues: Chromosome partition protein MukE (231 aa).

The tract at residues 195–231 is disordered; the sequence is MIRDGEAMPVEGSLSLKDDSDDNDRTDDTAPETGEDE. A compositionally biased stretch (acidic residues) spans 213 to 231; that stretch reads DSDDNDRTDDTAPETGEDE.

The protein belongs to the MukE family. As to quaternary structure, interacts, and probably forms a ternary complex, with MukF and MukB. The complex formation is stimulated by calcium or magnesium.

It is found in the cytoplasm. The protein localises to the nucleoid. Functionally, involved in chromosome condensation, segregation and cell cycle progression. May participate in facilitating chromosome segregation by condensation DNA from both sides of a centrally located replisome during cell division. Probably acts via its interaction with MukB and MukF. The chain is Chromosome partition protein MukE from Pectobacterium atrosepticum (strain SCRI 1043 / ATCC BAA-672) (Erwinia carotovora subsp. atroseptica).